A 144-amino-acid chain; its full sequence is Methylglyoxal synthase (144 aa).

Residues 1–144 form the MGS-like domain; the sequence is MKIALIAHDE…KSGEEKETER (144 aa). Residues histidine 8, lysine 12, 34 to 37, and 54 to 55 each bind substrate; these read TGTT and SG. The active-site Proton donor/acceptor is the aspartate 60. A substrate-binding site is contributed by histidine 87.

The protein belongs to the methylglyoxal synthase family.

The enzyme catalyses dihydroxyacetone phosphate = methylglyoxal + phosphate. In terms of biological role, catalyzes the formation of methylglyoxal from dihydroxyacetone phosphate. The sequence is that of Methylglyoxal synthase from Geobacillus thermodenitrificans (strain NG80-2).